The primary structure comprises 484 residues: Glutamate--tRNA ligase (484 aa).

A 'HIGH' region motif is present at residues 11 to 21 (PSPTGYLHIGN). Positions 252 to 256 (KLSKR) match the 'KMSKS' region motif. K255 serves as a coordination point for ATP.

Belongs to the class-I aminoacyl-tRNA synthetase family. Glutamate--tRNA ligase type 1 subfamily. In terms of assembly, monomer.

It is found in the cytoplasm. The catalysed reaction is tRNA(Glu) + L-glutamate + ATP = L-glutamyl-tRNA(Glu) + AMP + diphosphate. In terms of biological role, catalyzes the attachment of glutamate to tRNA(Glu) in a two-step reaction: glutamate is first activated by ATP to form Glu-AMP and then transferred to the acceptor end of tRNA(Glu). The protein is Glutamate--tRNA ligase of Staphylococcus aureus (strain COL).